The primary structure comprises 1060 residues: Centrosomal protein of 131 kDa (1060 aa).

The span at M1–P11 shows a compositional bias: polar residues. A disordered region spans residues M1–T96. Positions M1 to L244 are interaction with PLK4. Phosphoserine is present on residues S14 and S35. 2 stretches are compositionally biased toward polar residues: residues R32–T50 and L73–G88. S47 carries the phosphoserine; by MAPKAPK2 modification. S78 is subject to Phosphoserine; by MAPKAPK2 and PLK4. S89, S105, S114, S146, and S150 each carry phosphoserine. 2 disordered regions span residues L136–R155 and E217–R248. Positions E217–K226 are enriched in basic and acidic residues. Residues N263–G283 form the IQ domain. 2 stretches are compositionally biased toward basic and acidic residues: residues E314–R327 and K344–E363. The interval E314–R437 is disordered. A compositionally biased stretch (low complexity) spans A398–S408. A compositionally biased stretch (basic and acidic residues) spans P409–Q424. T473 carries the post-translational modification Phosphothreonine. At S481 the chain carries Phosphoserine.

It belongs to the CEP131 family. Self-associates. Associates with the centriolar satellite BBSome protein complex Interacts with BBS4; the interaction limits BBS4 availability for association with the BBSome complex, and hence negatively regulates ciliary localization of the BBSome complex. Interacts with MIB1. Interacts with PCM1; the interaction increases in response to ultraviolet light (UV) radiation. Associates with microtubule; association to microtubule is reduced in response to cellular stress, such as UV stimulation, in a process that requires p38 MAP kinase signaling. Interacts with CEP290, DCTN1, MAP1LC3B, PCNT, PCM1 and CEP152. Interacts with 14-3-3 proteins following UV-induced phosphorylation by MAPKAPK2; this inhibits formation of novel centriolar satellites. Interacts with SDCCAG8. Interacts with CCDC61. Interacts with PLK4. Ubiquitinated. Undergoes monoubiquitination catalyzed by the E3 ubiquitin-protein ligase MIB1 in proliferating cells, preventing cilia formation. Monoubiquitination by MIB1 is inhibited in response to cellular stress, such as ultraviolet light (UV) radiation or heat shock, resulting in ciliogenesis restoration. Post-translationally, MAPKAPK2-dependent phosphorylation at Ser-47 and Ser-78 occurs in response to cellular stress such as exposure to ultraviolet irradiation and promotes binding to 14-3-3 proteins which leads to cytoplasmic sequestration of CEP131 and blocks formation of new centriolar satellites. Phosphorylation at Ser-78 mediated by PLK4 is essential for proper organization and integrity of centriolar satellites but is dispensable for its localization to centrioles and its function in ciliogenesis. Localized to the pre-acrosome region of round and elongated spermatids in testis but also present in ovary, brain and adipose tissue.

It localises to the cytoplasm. The protein resides in the cytoskeleton. The protein localises to the microtubule organizing center. Its subcellular location is the centrosome. It is found in the centriolar satellite. It localises to the centriole. The protein resides in the cilium basal body. The protein localises to the cytoplasmic vesicle. Its subcellular location is the secretory vesicle. It is found in the acrosome. Its function is as follows. Component of centriolar satellites contributing to the building of a complex and dynamic network required to regulate cilia/flagellum formation. In proliferating cells, MIB1-mediated ubiquitination induces its sequestration within centriolar satellites, precluding untimely cilia formation initiation. In contrast, during normal and ultraviolet or heat shock cellular stress-induced ciliogenesis, its non-ubiquitinated form is rapidly displaced from centriolar satellites and recruited to centrosome/basal bodies in a microtubule- and p38 MAPK-dependent manner. Also acts as a negative regulator of BBSome ciliary trafficking. Plays a role in sperm flagellar formation; may be involved in the regulation of intraflagellar transport (IFT) and/or intramanchette (IMT) trafficking, which are important for axoneme extension and/or cargo delivery to the nascent sperm tail. Required for optimal cell proliferation and cell cycle progression; may play a role in the regulation of genome stability and centriole duplication in non-ciliogenic cells. Involved in centriole duplication. Required for CEP152, WDR62 and CEP63 centrosomal localization and promotes the centrosomal localization of CDK2. Essential for maintaining proper centriolar satellite integrity. This is Centrosomal protein of 131 kDa (Cep131) from Mus musculus (Mouse).